Reading from the N-terminus, the 981-residue chain is NAD(+) hydrolase tir-1 (981 aa).

Disordered regions lie at residues methionine 1–lysine 31, glutamine 74–proline 128, and leucine 173–glutamine 225. 2 stretches are compositionally biased toward polar residues: residues proline 12 to arginine 23 and glutamine 74 to aspartate 85. A compositionally biased stretch (acidic residues) spans alanine 87–leucine 97. Residues serine 98–valine 114 show a composition bias toward low complexity. Positions proline 115–proline 128 are enriched in pro residues. The span at glutamate 182 to serine 200 shows a compositional bias: basic and acidic residues. SAM domains lie at tryptophan 614–alanine 678 and valine 684–proline 750. The region spanning lysine 760–phenylalanine 857 is the TIR domain. Arginine 769 to arginine 770 is a binding site for NAD(+). Residue glutamate 842 is part of the active site. 3 stretches are compositionally biased toward polar residues: residues threonine 908–serine 939, phenylalanine 954–alanine 963, and proline 972–asparagine 981. Residues threonine 908–asparagine 981 are disordered.

This sequence belongs to the SARM1 family. In terms of assembly, homodimer. Interacts with rab-1, pal-1 and unc-43. Highly expressed in hypodermis. Localizes to postsynaptic regions of axons.

The protein resides in the cytoplasm. The catalysed reaction is NAD(+) + H2O = ADP-D-ribose + nicotinamide + H(+). NAD(+) hydrolase, which plays a key role in non-apoptotic cell death by regulating NAD(+) metabolism. In response to stress, homooligomerizes and catalyzes cleavage of NAD(+) into ADP-D-ribose (ADPR) and nicotinamide; NAD(+) cleavage promoting non-apoptotic neuronal cell death. In males, involved in non-apoptotic death of the linker cell which guides gonad elongation during larval development. Required for both innate immune response and specification of AWC(OFF) neuron. During late embryogenesis, it acts downstream of CAMKII (unc-43) to regulate specification of asymmetric odorant receptors in AWC(OFF) neuron via the nsy-1/ASK1 pmk-1/p38 MAP kinase signaling cascade. Required to localize nsy-1 to postsynaptic regions of AWC neuron, suggesting that it may act by assembling a signaling complex that regulate odorant receptor expression. Also plays a central role in resistance to infection to a broad range of bacterial and fungi pathogens, possibly by activating pmk-1, independently of the NF-kappa-B pathway. Required for expression of antimicrobial peptides nlp-29 and nlp-31. Its role in immune response and neuron specification may be mediated by the same nsy-1/ASK1 pmk-1/p38 MAP kinase cascade signaling pathway. Involved in the response to anoxic conditions probably by activating the p38 pathway composed of nsy-1/sek-1/pmk-1. Involved in regulation of the serotonergic response of ADF neurons to pathogenic food. In addition, plays a role in the up-regulation of gcs-1 upon arsenite treatment, most likely through activation of pmk-1, to confer protection against toxicity induced by heavy metals. In terms of biological role, regulates expression of antimicrobial peptide nlp-29 in response to fungal infection or physical injury. The chain is NAD(+) hydrolase tir-1 from Caenorhabditis elegans.